The sequence spans 107 residues: SH3 domain-binding glutamic acid-rich-like protein 2 (107 aa).

Positions 61–67 match the SH3-binding motif; it reads QGNPLPP.

The protein belongs to the SH3BGR family.

Its subcellular location is the nucleus. The protein is SH3 domain-binding glutamic acid-rich-like protein 2 (SH3BGRL2) of Bos taurus (Bovine).